A 179-amino-acid polypeptide reads, in one-letter code: Bifunctional protein PyrR (179 aa).

Residues 100–112 (VILVDDVLFTGRT) carry the PRPP-binding motif.

The protein belongs to the purine/pyrimidine phosphoribosyltransferase family. PyrR subfamily.

It catalyses the reaction UMP + diphosphate = 5-phospho-alpha-D-ribose 1-diphosphate + uracil. Functionally, regulates the transcription of the pyrimidine nucleotide (pyr) operon in response to exogenous pyrimidines. Also displays a weak uracil phosphoribosyltransferase activity which is not physiologically significant. The sequence is that of Bifunctional protein PyrR from Haemophilus influenzae (strain 86-028NP).